We begin with the raw amino-acid sequence, 155 residues long: Transcriptional repressor NrdR (155 aa).

Over residues Met1–Ser11 the composition is skewed to polar residues. The interval Met1–Asn22 is disordered. Residues Cys3 to Cys34 fold into a zinc finger. In terms of domain architecture, ATP-cone spans Leu49 to Ser139.

It belongs to the NrdR family. It depends on Zn(2+) as a cofactor.

In terms of biological role, negatively regulates transcription of bacterial ribonucleotide reductase nrd genes and operons by binding to NrdR-boxes. The chain is Transcriptional repressor NrdR from Lactobacillus acidophilus (strain ATCC 700396 / NCK56 / N2 / NCFM).